The following is a 139-amino-acid chain: uncharacterized protein (139 aa).

This is an uncharacterized protein from Saccharolobus islandicus (Sulfolobus islandicus).